The following is a 350-amino-acid chain: 3-dehydroquinate synthase (350 aa).

NAD(+) contacts are provided by residues 106–110, 130–131, Lys143, and Lys152; these read GVVGD and TS. 3 residues coordinate Zn(2+): Glu185, His246, and His263.

Belongs to the sugar phosphate cyclases superfamily. Dehydroquinate synthase family. The cofactor is Co(2+). It depends on Zn(2+) as a cofactor. NAD(+) serves as cofactor.

The protein resides in the cytoplasm. The catalysed reaction is 7-phospho-2-dehydro-3-deoxy-D-arabino-heptonate = 3-dehydroquinate + phosphate. Its pathway is metabolic intermediate biosynthesis; chorismate biosynthesis; chorismate from D-erythrose 4-phosphate and phosphoenolpyruvate: step 2/7. Functionally, catalyzes the conversion of 3-deoxy-D-arabino-heptulosonate 7-phosphate (DAHP) to dehydroquinate (DHQ). This is 3-dehydroquinate synthase from Clostridium perfringens (strain SM101 / Type A).